A 161-amino-acid chain; its full sequence is UPF0225 protein NTHI0386 (161 aa).

Belongs to the UPF0225 family.

This is UPF0225 protein NTHI0386 from Haemophilus influenzae (strain 86-028NP).